A 249-amino-acid polypeptide reads, in one-letter code: Aspartate/glutamate leucyltransferase (249 aa).

It belongs to the R-transferase family. Bpt subfamily.

The protein resides in the cytoplasm. It catalyses the reaction N-terminal L-glutamyl-[protein] + L-leucyl-tRNA(Leu) = N-terminal L-leucyl-L-glutamyl-[protein] + tRNA(Leu) + H(+). The catalysed reaction is N-terminal L-aspartyl-[protein] + L-leucyl-tRNA(Leu) = N-terminal L-leucyl-L-aspartyl-[protein] + tRNA(Leu) + H(+). Functions in the N-end rule pathway of protein degradation where it conjugates Leu from its aminoacyl-tRNA to the N-termini of proteins containing an N-terminal aspartate or glutamate. The sequence is that of Aspartate/glutamate leucyltransferase from Brucella suis (strain ATCC 23445 / NCTC 10510).